A 396-amino-acid chain; its full sequence is Elongation factor Tu (396 aa).

In terms of domain architecture, tr-type G spans 10 to 206 (KPHVNVGTIG…ALDSYIPTPE (197 aa)). The interval 19–26 (GHVDHGKT) is G1. Residue 19 to 26 (GHVDHGKT) participates in GTP binding. Threonine 26 contacts Mg(2+). Residues 60-64 (GITIN) form a G2 region. Positions 81–84 (DCPG) are G3. GTP-binding positions include 81–85 (DCPGH) and 136–139 (NKCD). The tract at residues 136–139 (NKCD) is G4. Residues 174-176 (SAK) form a G5 region.

Belongs to the TRAFAC class translation factor GTPase superfamily. Classic translation factor GTPase family. EF-Tu/EF-1A subfamily. Monomer.

The protein resides in the cytoplasm. It catalyses the reaction GTP + H2O = GDP + phosphate + H(+). Functionally, GTP hydrolase that promotes the GTP-dependent binding of aminoacyl-tRNA to the A-site of ribosomes during protein biosynthesis. In Herminiimonas arsenicoxydans, this protein is Elongation factor Tu.